Here is a 473-residue protein sequence, read N- to C-terminus: Response regulator protein FleR (473 aa).

The Response regulatory domain occupies Lys4 to Ala118. At Asp53 the chain carries 4-aspartylphosphate. The 230-residue stretch at Pro130–Ile359 folds into the Sigma-54 factor interaction domain. ATP-binding positions include Gly158–Glu165 and Ala221–Glu230.

In terms of biological role, member of the two-component regulatory system FleS/FleR that regulates the expression of multiple genes involved in flagellar synthesis, adhesion, swarming, motility and antibiotic resistance. May function as a transcriptional activator by direct binding to a cis-acting sequence upstream of the target genes. This Pseudomonas aeruginosa (strain ATCC 15692 / DSM 22644 / CIP 104116 / JCM 14847 / LMG 12228 / 1C / PRS 101 / PAO1) protein is Response regulator protein FleR.